We begin with the raw amino-acid sequence, 111 residues long: Nucleoid-associated protein Cphamn1_1179 (111 aa).

The protein belongs to the YbaB/EbfC family. Homodimer.

It is found in the cytoplasm. It localises to the nucleoid. Functionally, binds to DNA and alters its conformation. May be involved in regulation of gene expression, nucleoid organization and DNA protection. In Chlorobium phaeobacteroides (strain BS1), this protein is Nucleoid-associated protein Cphamn1_1179.